A 726-amino-acid chain; its full sequence is uncharacterized protein (726 aa).

Residues Ser-583 and His-698 each act as charge relay system in the active site.

It belongs to the peptidase S9B family.

This is an uncharacterized protein from Sinorhizobium fredii (strain NBRC 101917 / NGR234).